Consider the following 416-residue polypeptide: Nuclear hormone receptor family member nhr-59 (416 aa).

The segment at residues 17-94 (QTFCQVCGQE…IGMDIQNFQF (78 aa)) is a DNA-binding region (nuclear receptor). 2 consecutive NR C4-type zinc fingers follow at residues 20–40 (CQVC…CRAC) and 57–82 (CKDG…LKKC). Positions 162–415 (TRLQKLSSSL…FSHPELVKDV (254 aa)) constitute an NR LBD domain.

The protein belongs to the nuclear hormone receptor family.

The protein resides in the nucleus. Its function is as follows. Orphan nuclear receptor. In Caenorhabditis elegans, this protein is Nuclear hormone receptor family member nhr-59.